A 446-amino-acid polypeptide reads, in one-letter code: Exodeoxyribonuclease 7 large subunit (446 aa).

The protein belongs to the XseA family. As to quaternary structure, heterooligomer composed of large and small subunits.

Its subcellular location is the cytoplasm. The catalysed reaction is Exonucleolytic cleavage in either 5'- to 3'- or 3'- to 5'-direction to yield nucleoside 5'-phosphates.. Functionally, bidirectionally degrades single-stranded DNA into large acid-insoluble oligonucleotides, which are then degraded further into small acid-soluble oligonucleotides. The polypeptide is Exodeoxyribonuclease 7 large subunit (Streptococcus pneumoniae (strain ATCC 700669 / Spain 23F-1)).